The chain runs to 365 residues: Class I histocompatibility antigen, Gogo-A*0401 alpha chain (365 aa).

The N-terminal stretch at 1 to 24 (MAVMAPRTLVLLLSGALALTQTWA) is a signal peptide. Residues 25–114 (GSHSMRYFYT…LRGYYNQSED (90 aa)) are alpha-1. Topologically, residues 25 to 308 (GSHSMRYFYT…EPSSQPTIPI (284 aa)) are extracellular. Asn-110 carries an N-linked (GlcNAc...) asparagine glycan. Positions 115 to 206 (GSHTIQRMYG…ENGKETLQLT (92 aa)) are alpha-2. 2 cysteine pairs are disulfide-bonded: Cys-125–Cys-188 and Cys-227–Cys-283. The interval 207-298 (DAPKTHMTHH…GLPKPLTLRW (92 aa)) is alpha-3. Residues 209–295 (PKTHMTHHPV…QHEGLPKPLT (87 aa)) form the Ig-like C1-type domain. A connecting peptide region spans residues 299–308 (EPSSQPTIPI). A helical transmembrane segment spans residues 309 to 332 (VGIIAGLVLFGAVIAGAVVAAVRW). Residues 333–365 (RRKSSDRKGGSYSQAASSDSAQGSDVSLTACKV) lie on the Cytoplasmic side of the membrane. Residues 338–365 (DRKGGSYSQAASSDSAQGSDVSLTACKV) are disordered. Residues 342–359 (GSYSQAASSDSAQGSDVS) are compositionally biased toward low complexity. Phosphoserine is present on Ser-343. Position 344 is a phosphotyrosine (Tyr-344). Ser-345, Ser-349, Ser-350, Ser-352, Ser-356, and Ser-359 each carry phosphoserine.

It belongs to the MHC class I family. In terms of assembly, heterodimer of an alpha chain and a beta chain (beta-2-microglobulin).

It localises to the membrane. Its function is as follows. Involved in the presentation of foreign antigens to the immune system. The sequence is that of Class I histocompatibility antigen, Gogo-A*0401 alpha chain from Gorilla gorilla gorilla (Western lowland gorilla).